We begin with the raw amino-acid sequence, 63 residues long: Alpha-conotoxin-like Sm1.3 (63 aa).

The N-terminal stretch at M1–S16 is a signal peptide. A propeptide spanning residues S17 to K43 is cleaved from the precursor. 2 disulfide bridges follow: C45/C51 and C46/C59. M58 carries the methionine sulfoxide; partial modification. Residue C59 is modified to Cysteine amide; partial.

It belongs to the conotoxin A superfamily. As to expression, expressed by the venom duct.

The protein resides in the secreted. Alpha-conotoxins act on postsynaptic membranes, they bind to the nicotinic acetylcholine receptors (nAChR) and thus inhibit them. The protein is Alpha-conotoxin-like Sm1.3 of Conus stercusmuscarum (Fly-specked cone).